The primary structure comprises 321 residues: MLPADAVNRHSCEKNLYVGVCKLTLPMKQLWWVVYIIDTVLVYLVIPFRDLLLRERPGEDCDTKGKERPLVGGDTPHSLLPPLGNSLSYADFTVKRPGRWRSPMILAHSMQRLRACFSLSSNVTLMLIRLDLWLKLRGLCVFPTYVIALSILFTMFGGVRIATLPLSLIFAFKNRPKCVMALQEATDLAKSSNVLKKVTLGLQREERGGKKGRKLRKNVKKVQQEDTSWALTVLFYLAKLVFGILGLALSIIWLLHILVFMLVNPPAFPFLNQVFIQLDSAGDLLGTTPFAIFCYYFVMSVISGEMHLGMKLLFLSIHPMK.

5 consecutive transmembrane segments (helical) span residues 28–48 (KQLW…VIPF), 116–133 (CFSL…LDLW), 139–159 (LCVF…FGGV), 240–260 (LVFG…ILVF), and 284–304 (LLGT…VISG).

It belongs to the LIMR family.

It is found in the membrane. This is LIMR family protein SELMODRAFT_432210 from Selaginella moellendorffii (Spikemoss).